The following is a 776-amino-acid chain: Methionine--tRNA ligase (776 aa).

Positions 10-20 (PYSNGPIHLGH) match the 'HIGH' region motif. Zn(2+) is bound by residues Cys-143, Cys-146, Cys-156, and Cys-159. The 'KMSKS' region motif lies at 375–379 (KFSKS). An ATP-binding site is contributed by Lys-378. Positions 676–776 (DFAKLDMRVG…KPISLGSKVR (101 aa)) constitute a tRNA-binding domain.

This sequence belongs to the class-I aminoacyl-tRNA synthetase family. MetG type 1 subfamily. As to quaternary structure, homodimer. Requires Zn(2+) as cofactor.

The protein resides in the cytoplasm. It catalyses the reaction tRNA(Met) + L-methionine + ATP = L-methionyl-tRNA(Met) + AMP + diphosphate. In terms of biological role, is required not only for elongation of protein synthesis but also for the initiation of all mRNA translation through initiator tRNA(fMet) aminoacylation. This Nanoarchaeum equitans (strain Kin4-M) protein is Methionine--tRNA ligase (metG).